Here is a 105-residue protein sequence, read N- to C-terminus: Large ribosomal subunit protein bL21 (105 aa).

It belongs to the bacterial ribosomal protein bL21 family. Part of the 50S ribosomal subunit. Contacts protein L20.

In terms of biological role, this protein binds to 23S rRNA in the presence of protein L20. This chain is Large ribosomal subunit protein bL21, found in Rickettsia canadensis (strain McKiel).